Here is a 142-residue protein sequence, read N- to C-terminus: Large ribosomal subunit protein uL29 (142 aa).

The protein belongs to the universal ribosomal protein uL29 family.

This Theileria annulata protein is Large ribosomal subunit protein uL29 (RPL35).